Reading from the N-terminus, the 316-residue chain is Protein U25 (316 aa).

Belongs to the herpesviridae US22 family.

This is Protein U25 (U25) from Homo sapiens (Human).